A 130-amino-acid polypeptide reads, in one-letter code: Glycine cleavage system H protein (130 aa).

Positions 24 to 106 (EYTVGITEHA…YHEGWLFRIK (83 aa)) constitute a Lipoyl-binding domain. N6-lipoyllysine is present on Lys-65.

It belongs to the GcvH family. In terms of assembly, the glycine cleavage system is composed of four proteins: P, T, L and H. Requires (R)-lipoate as cofactor.

Functionally, the glycine cleavage system catalyzes the degradation of glycine. The H protein shuttles the methylamine group of glycine from the P protein to the T protein. The chain is Glycine cleavage system H protein from Photorhabdus laumondii subsp. laumondii (strain DSM 15139 / CIP 105565 / TT01) (Photorhabdus luminescens subsp. laumondii).